Here is a 169-residue protein sequence, read N- to C-terminus: Putative esterase F42H10.6 (169 aa).

The protein belongs to the thioesterase paaI family.

The protein is Putative esterase F42H10.6 of Caenorhabditis elegans.